A 397-amino-acid polypeptide reads, in one-letter code: Methylthioribose kinase (397 aa).

ATP contacts are provided by residues asparagine 43, lysine 60, and 114–116 (EDL). Aspartate 232 is a substrate binding site. An ATP-binding site is contributed by 249–251 (DPE). Residue arginine 340 participates in substrate binding.

This sequence belongs to the methylthioribose kinase family. In terms of assembly, homodimer.

It carries out the reaction 5-(methylsulfanyl)-D-ribose + ATP = 5-(methylsulfanyl)-alpha-D-ribose 1-phosphate + ADP + H(+). It participates in amino-acid biosynthesis; L-methionine biosynthesis via salvage pathway; S-methyl-5-thio-alpha-D-ribose 1-phosphate from S-methyl-5'-thioadenosine (hydrolase route): step 2/2. Functionally, catalyzes the phosphorylation of methylthioribose into methylthioribose-1-phosphate. This is Methylthioribose kinase from Bacillus pumilus (strain SAFR-032).